We begin with the raw amino-acid sequence, 472 residues long: Methanethiol oxidase (472 aa).

Position 2 is an N-acetylalanine (A2). Residues S111 and S467 each carry the phosphoserine modification.

It belongs to the selenium-binding protein family. In terms of assembly, interacts with USP33. Post-translationally, the N-terminus is blocked. As to expression, highly expressed in liver, kidney and, to a lesser extent, lung.

It localises to the nucleus. It is found in the cytoplasm. Its subcellular location is the cytosol. The protein resides in the membrane. It catalyses the reaction methanethiol + O2 + H2O = hydrogen sulfide + formaldehyde + H2O2 + H(+). It participates in organosulfur degradation. Catalyzes the oxidation of methanethiol, an organosulfur compound known to be produced in substantial amounts by gut bacteria. Selenium-binding protein which may be involved in the sensing of reactive xenobiotics in the cytoplasm. May be involved in intra-Golgi protein transport. This is Methanethiol oxidase (Selenbp1) from Mus musculus (Mouse).